The following is a 365-amino-acid chain: tRNA N6-adenosine threonylcarbamoyltransferase (365 aa).

Residues H119 and H123 each contribute to the Fe cation site. Residues 141-145 (LVSGG), D174, G187, and N288 contribute to the substrate site. Residue D316 coordinates Fe cation.

The protein belongs to the KAE1 / TsaD family. Fe(2+) serves as cofactor.

It localises to the cytoplasm. The enzyme catalyses L-threonylcarbamoyladenylate + adenosine(37) in tRNA = N(6)-L-threonylcarbamoyladenosine(37) in tRNA + AMP + H(+). Required for the formation of a threonylcarbamoyl group on adenosine at position 37 (t(6)A37) in tRNAs that read codons beginning with adenine. Is involved in the transfer of the threonylcarbamoyl moiety of threonylcarbamoyl-AMP (TC-AMP) to the N6 group of A37, together with TsaE and TsaB. TsaD likely plays a direct catalytic role in this reaction. The chain is tRNA N6-adenosine threonylcarbamoyltransferase from Rhizobium etli (strain ATCC 51251 / DSM 11541 / JCM 21823 / NBRC 15573 / CFN 42).